The sequence spans 195 residues: Imidazoleglycerol-phosphate dehydratase (195 aa).

It belongs to the imidazoleglycerol-phosphate dehydratase family.

The protein localises to the cytoplasm. The catalysed reaction is D-erythro-1-(imidazol-4-yl)glycerol 3-phosphate = 3-(imidazol-4-yl)-2-oxopropyl phosphate + H2O. It participates in amino-acid biosynthesis; L-histidine biosynthesis; L-histidine from 5-phospho-alpha-D-ribose 1-diphosphate: step 6/9. This is Imidazoleglycerol-phosphate dehydratase from Burkholderia multivorans (strain ATCC 17616 / 249).